Consider the following 250-residue polypeptide: UPF0524 protein C3orf70 homolog (250 aa).

Residues 201–250 (ESCDEDTEEGAELSSEEDYSPESSWEPDECTLLSPSQSDLEVIETIETTV) form a disordered region. Residues 202-229 (SCDEDTEEGAELSSEEDYSPESSWEPDE) show a composition bias toward acidic residues.

It belongs to the UPF0524 family.

May play a role in neuronal and neurobehavioral development. The sequence is that of UPF0524 protein C3orf70 homolog from Bos taurus (Bovine).